Consider the following 346-residue polypeptide: Hexosaminidase D (346 aa).

The Proton donor role is filled by Glu141.

It belongs to the glycosyl hydrolase 20 family. Homodimer; disulfide-linked.

It localises to the cytoplasm. Its subcellular location is the nucleus. It is found in the extracellular vesicle. It carries out the reaction Hydrolysis of terminal non-reducing N-acetyl-D-hexosamine residues in N-acetyl-beta-D-hexosaminides.. With respect to regulation, inhibited by O-(2-acetamido-2-deoxy-D-glucopyranosylidene)amino N-phenylcarbamate (PUGNAc). Inhibited by galacto-NAG-thiazoline. Functionally, has hexosaminidase activity. Responsible for the cleavage of the monosaccharides N-acetylglucosamine (GlcNAc) and N-acetylgalactosamine (GalNAc) from cellular substrates. Has a preference for galactosaminide over glucosaminide substrates. This is Hexosaminidase D from Bos taurus (Bovine).